The chain runs to 329 residues: UDP-sugar transporter sqv-7 (329 aa).

A run of 9 helical transmembrane segments spans residues 15 to 34, 41 to 63, 86 to 108, 129 to 151, 155 to 174, 187 to 209, 224 to 246, 253 to 275, and 280 to 302; these read SAVFYGVISVLIVFVNKILL, SFLFVGVGQMMATILILFFAKMF, YFFNLISGLGGTQMINLPMFTVL, SKAVKISVGLMIGGSFIAAIYDL, ALGYTMIFINNICTAALGVY, YGLMFYNCLFMLLPALCVVQYTG, TSSVWTCFLLSCICGFVLNYSLV, SALTTTCVGPIKNLFVTYVGMFS, and VFQWANFTGINVSVFGSILYTYV.

Belongs to the TPT transporter family. SLC35D subfamily.

It localises to the golgi apparatus membrane. Functionally, acts as a transporter of UDP-glucuronic acid (UDP-GlcA), UDP-N-acetylgalactosamine (UDP-GalNAc) and UDP-galactose (UDP-Gal) from the cytoplasm into the Golgi lumen. Involved in the biosynthesis of glycoconjugates that play a pivotal role in development. Involved in the synthesis of chondroitin sulfate and heparan sulfate proteoglycans. Required for embryonic development. Involved in vulva epithelium invagination and embryonic development. Involved in the directed migration of hermaphrodite-specific neurons. The polypeptide is UDP-sugar transporter sqv-7 (sqv-7) (Caenorhabditis elegans).